Consider the following 304-residue polypeptide: Ornithine carbamoyltransferase (304 aa).

Carbamoyl phosphate is bound by residues 53–56 (STRT), glutamine 80, arginine 104, and 131–134 (HPCQ). Residues asparagine 162, aspartate 222, and 226–227 (SM) contribute to the L-ornithine site. Carbamoyl phosphate contacts are provided by residues 261–262 (CL) and arginine 289.

This sequence belongs to the aspartate/ornithine carbamoyltransferase superfamily. OTCase family.

The protein localises to the cytoplasm. It catalyses the reaction carbamoyl phosphate + L-ornithine = L-citrulline + phosphate + H(+). It functions in the pathway amino-acid biosynthesis; L-arginine biosynthesis; L-arginine from L-ornithine and carbamoyl phosphate: step 1/3. Reversibly catalyzes the transfer of the carbamoyl group from carbamoyl phosphate (CP) to the N(epsilon) atom of ornithine (ORN) to produce L-citrulline. The protein is Ornithine carbamoyltransferase of Rhizobium johnstonii (strain DSM 114642 / LMG 32736 / 3841) (Rhizobium leguminosarum bv. viciae).